Reading from the N-terminus, the 175-residue chain is Disulfide bond formation protein B 2 (175 aa).

Over 1–9 the chain is Cytoplasmic; that stretch reads MYLARTRFL. The chain crosses the membrane as a helical span at residues 10–26; it reads FFLASLACASIIGVAFY. Topologically, residues 27–44 are periplasmic; the sequence is LQQAVGLDPCTLCMVQRA. A disulfide bridge connects residues cysteine 36 and cysteine 39. The helical transmembrane segment at 45-61 threads the bilayer; it reads AFIACGVLALCAACHAP. At 62-68 the chain is on the cytoplasmic side; sequence GPTGTRR. The helical transmembrane segment at 69-85 threads the bilayer; the sequence is YSLGLLLVALAGLAGAG. The Periplasmic portion of the chain corresponds to 86 to 142; it reads TQVWLQTASADQLIPFITRLEQILSLLSLDMCIDRLRSDALFCAEITWTLFGISLPE. A helical membrane pass occupies residues 143 to 161; sequence WSLLAFTGLALLPLYPLFS. At 162–175 the chain is on the cytoplasmic side; it reads ELSHWLATRDRGGY.

This sequence belongs to the DsbB family.

Its subcellular location is the cell inner membrane. In terms of biological role, required for disulfide bond formation in some periplasmic proteins. Acts by oxidizing the DsbA protein. This is Disulfide bond formation protein B 2 from Pseudomonas syringae pv. syringae (strain B728a).